Consider the following 209-residue polypeptide: MSHGHSHGGGCSCESEPSDGPERGLEYGLFRKIDLDKLQCLNESREGSGRSVFRAWEERNDRTRFVESDDDEELLFNIPFTGNVKLKGIVLIGEDSDTHPAELRLFKNVPHMSFDDTGREADQTFSLNIDVNGNLEYPTKIARFSNVSHLSIHISKNFGAENTKIYYIGLRGEWTEAHRHEVTICNYEAAANPADHKVSQITPQTNFIS.

Positions 18–190 (SDGPERGLEY…EVTICNYEAA (173 aa)) constitute a PITH domain.

Belongs to the PITHD1 family.

The protein localises to the cytoplasm. In terms of biological role, may play a role in promoting megakaryocyte differentiation by up-regulating RUNX1 expression. The sequence is that of PITH domain-containing protein 1 (pithd1) from Xenopus laevis (African clawed frog).